The chain runs to 422 residues: Transcription termination factor Rho 1 (422 aa).

A Rho RNA-BD domain is found at 49-124 (AAIGGGVVEI…VKAHSINFTD (76 aa)). Residues 173–178 (GKGQRA), 185–190 (RAGKTI), and Arg216 each bind ATP.

It belongs to the Rho family. Homohexamer. The homohexamer assembles into an open ring structure.

In terms of biological role, facilitates transcription termination by a mechanism that involves Rho binding to the nascent RNA, activation of Rho's RNA-dependent ATPase activity, and release of the mRNA from the DNA template. The chain is Transcription termination factor Rho 1 from Ehrlichia chaffeensis (strain ATCC CRL-10679 / Arkansas).